The sequence spans 567 residues: Proline--tRNA ligase (567 aa).

This sequence belongs to the class-II aminoacyl-tRNA synthetase family. ProS type 1 subfamily. In terms of assembly, homodimer.

Its subcellular location is the cytoplasm. The catalysed reaction is tRNA(Pro) + L-proline + ATP = L-prolyl-tRNA(Pro) + AMP + diphosphate. Its function is as follows. Catalyzes the attachment of proline to tRNA(Pro) in a two-step reaction: proline is first activated by ATP to form Pro-AMP and then transferred to the acceptor end of tRNA(Pro). As ProRS can inadvertently accommodate and process non-cognate amino acids such as alanine and cysteine, to avoid such errors it has two additional distinct editing activities against alanine. One activity is designated as 'pretransfer' editing and involves the tRNA(Pro)-independent hydrolysis of activated Ala-AMP. The other activity is designated 'posttransfer' editing and involves deacylation of mischarged Ala-tRNA(Pro). The misacylated Cys-tRNA(Pro) is not edited by ProRS. This is Proline--tRNA ligase from Staphylococcus aureus (strain USA300).